A 400-amino-acid polypeptide reads, in one-letter code: Subtilisin-like protease 11 (400 aa).

Positions methionine 1 to alanine 19 are cleaved as a signal peptide. Positions alanine 20–aspartate 117 are excised as a propeptide. An Inhibitor I9 domain is found at serine 35–isoleucine 116. Residues serine 127 to glutamine 400 enclose the Peptidase S8 domain. Residue asparagine 138 is glycosylated (N-linked (GlcNAc...) asparagine). Catalysis depends on charge relay system residues aspartate 159 and histidine 191. N-linked (GlcNAc...) asparagine glycans are attached at residues asparagine 252, asparagine 336, and asparagine 337. The Charge relay system role is filled by serine 346. Residues asparagine 388 and asparagine 396 are each glycosylated (N-linked (GlcNAc...) asparagine).

It belongs to the peptidase S8 family.

It localises to the secreted. In terms of biological role, secreted subtilisin-like serine protease with keratinolytic activity that contributes to pathogenicity. The protein is Subtilisin-like protease 11 (SUB11) of Arthroderma gypseum (strain ATCC MYA-4604 / CBS 118893) (Microsporum gypseum).